The primary structure comprises 483 residues: Siroheme synthase (483 aa).

Positions 1 to 203 (MNYFPIFANL…RQNTLAEREL (203 aa)) are precorrin-2 dehydrogenase /sirohydrochlorin ferrochelatase. NAD(+) is bound by residues 22–23 (AV) and 43–44 (KH). S128 bears the Phosphoserine mark. Residues 214–483 (GFVSLVGAGP…LGTGQEQQAA (270 aa)) are uroporphyrinogen-III C-methyltransferase. S-adenosyl-L-methionine is bound at residue P223. D246 serves as the catalytic Proton acceptor. Catalysis depends on K268, which acts as the Proton donor. Residues 299-301 (GGD), V304, 329-330 (TA), M381, and G410 each bind S-adenosyl-L-methionine.

The protein in the N-terminal section; belongs to the precorrin-2 dehydrogenase / sirohydrochlorin ferrochelatase family. In the C-terminal section; belongs to the precorrin methyltransferase family.

The catalysed reaction is uroporphyrinogen III + 2 S-adenosyl-L-methionine = precorrin-2 + 2 S-adenosyl-L-homocysteine + H(+). It carries out the reaction precorrin-2 + NAD(+) = sirohydrochlorin + NADH + 2 H(+). It catalyses the reaction siroheme + 2 H(+) = sirohydrochlorin + Fe(2+). Its pathway is cofactor biosynthesis; adenosylcobalamin biosynthesis; precorrin-2 from uroporphyrinogen III: step 1/1. The protein operates within cofactor biosynthesis; adenosylcobalamin biosynthesis; sirohydrochlorin from precorrin-2: step 1/1. It participates in porphyrin-containing compound metabolism; siroheme biosynthesis; precorrin-2 from uroporphyrinogen III: step 1/1. It functions in the pathway porphyrin-containing compound metabolism; siroheme biosynthesis; siroheme from sirohydrochlorin: step 1/1. Its pathway is porphyrin-containing compound metabolism; siroheme biosynthesis; sirohydrochlorin from precorrin-2: step 1/1. Multifunctional enzyme that catalyzes the SAM-dependent methylations of uroporphyrinogen III at position C-2 and C-7 to form precorrin-2 via precorrin-1. Then it catalyzes the NAD-dependent ring dehydrogenation of precorrin-2 to yield sirohydrochlorin. Finally, it catalyzes the ferrochelation of sirohydrochlorin to yield siroheme. This chain is Siroheme synthase, found in Neisseria meningitidis serogroup C / serotype 2a (strain ATCC 700532 / DSM 15464 / FAM18).